Consider the following 234-residue polypeptide: ADTIVAVELDTYPNTDIGDPSYQHIGINIKSIRSKATTRWDVQNGKVGTAHISYNSVAKRLSAVVSYPGGSSATVSYDVDLNNILPEWVRVGLSASTGLYKETNTILSWSFTSKSNSTADAQSLHFTFNQFSQSPKDLILQGDASTDSDGNLQLTRVSNGSPQSDSVGRALYYAPVHIWDKSAVVASFDATFTFLIKSPDREIADGIAFFIANTDSSIPHGSGGRLLGLFPDAN.

Residues E8 and D10 each coordinate Mn(2+). Residues D10, Y12, N14, and D19 each coordinate Ca(2+). Residue Y12 coordinates a carbohydrate. Mn(2+)-binding residues include D19, H24, and S34. Residue 99–100 (LY) participates in a carbohydrate binding. Residue D205 coordinates Ca(2+). An a carbohydrate-binding site is contributed by R225.

Belongs to the leguminous lectin family. Homotetramer. Post-translationally, the alpha and beta chains are produced by partial proteolytic processing of the lectin precursor by an asparaginyl endopeptidase.

Functionally, glucose/D-mannose specific lectin. The polypeptide is Mannose/glucose-specific lectin Cramoll (Cratylia mollis (Camaratu bean)).